The primary structure comprises 437 residues: Phosphomethylpyrimidine synthase (437 aa).

Residues Asn-69, Met-98, Tyr-127, His-163, 185–187 (SRG), 226–229 (DACR), and Glu-265 contribute to the substrate site. His-269 is a binding site for Zn(2+). Substrate is bound at residue Tyr-292. Residue His-333 participates in Zn(2+) binding. The [4Fe-4S] cluster site is built by Cys-409, Cys-412, and Cys-416.

It belongs to the ThiC family. [4Fe-4S] cluster serves as cofactor.

The enzyme catalyses 5-amino-1-(5-phospho-beta-D-ribosyl)imidazole + S-adenosyl-L-methionine = 4-amino-2-methyl-5-(phosphooxymethyl)pyrimidine + CO + 5'-deoxyadenosine + formate + L-methionine + 3 H(+). Its pathway is cofactor biosynthesis; thiamine diphosphate biosynthesis. In terms of biological role, catalyzes the synthesis of the hydroxymethylpyrimidine phosphate (HMP-P) moiety of thiamine from aminoimidazole ribotide (AIR) in a radical S-adenosyl-L-methionine (SAM)-dependent reaction. In Clostridium botulinum (strain Okra / Type B1), this protein is Phosphomethylpyrimidine synthase.